A 152-amino-acid chain; its full sequence is MTLFIDGDALPNILKPILLRSVERLKIPTKVIANKKIHIGDSPCIEMIIVSQGADRADDMIIELLSPEDLVITADIPLADRVITAGGHAIDHRGTRYSSDNIKHYLAMRNLFESIRESGEITNGPKPFTQKDAHAFANQLSAFLQRLEKRKK.

This sequence belongs to the UPF0178 family.

This chain is UPF0178 protein NIS_0137, found in Nitratiruptor sp. (strain SB155-2).